We begin with the raw amino-acid sequence, 375 residues long: Queuine tRNA-ribosyltransferase (375 aa).

Residue Asp89 is the Proton acceptor of the active site. Residues 89-93, Asp143, Gln187, and Gly214 each bind substrate; that span reads DSGGF. Residues 245–251 are RNA binding; it reads GVGKPED. Catalysis depends on Asp264, which acts as the Nucleophile. The interval 269–273 is RNA binding; important for wobble base 34 recognition; the sequence is TRNAR. Residues Cys302, Cys304, Cys307, and His333 each contribute to the Zn(2+) site.

This sequence belongs to the queuine tRNA-ribosyltransferase family. As to quaternary structure, homodimer. Within each dimer, one monomer is responsible for RNA recognition and catalysis, while the other monomer binds to the replacement base PreQ1. Zn(2+) serves as cofactor.

It catalyses the reaction 7-aminomethyl-7-carbaguanine + guanosine(34) in tRNA = 7-aminomethyl-7-carbaguanosine(34) in tRNA + guanine. It participates in tRNA modification; tRNA-queuosine biosynthesis. In terms of biological role, catalyzes the base-exchange of a guanine (G) residue with the queuine precursor 7-aminomethyl-7-deazaguanine (PreQ1) at position 34 (anticodon wobble position) in tRNAs with GU(N) anticodons (tRNA-Asp, -Asn, -His and -Tyr). Catalysis occurs through a double-displacement mechanism. The nucleophile active site attacks the C1' of nucleotide 34 to detach the guanine base from the RNA, forming a covalent enzyme-RNA intermediate. The proton acceptor active site deprotonates the incoming PreQ1, allowing a nucleophilic attack on the C1' of the ribose to form the product. After dissociation, two additional enzymatic reactions on the tRNA convert PreQ1 to queuine (Q), resulting in the hypermodified nucleoside queuosine (7-(((4,5-cis-dihydroxy-2-cyclopenten-1-yl)amino)methyl)-7-deazaguanosine). This is Queuine tRNA-ribosyltransferase from Shigella flexneri serotype 5b (strain 8401).